A 395-amino-acid polypeptide reads, in one-letter code: ATP phosphoribosyltransferase regulatory subunit (395 aa).

This sequence belongs to the class-II aminoacyl-tRNA synthetase family. HisZ subfamily. As to quaternary structure, heteromultimer composed of HisG and HisZ subunits.

Its subcellular location is the cytoplasm. It participates in amino-acid biosynthesis; L-histidine biosynthesis; L-histidine from 5-phospho-alpha-D-ribose 1-diphosphate: step 1/9. Required for the first step of histidine biosynthesis. May allow the feedback regulation of ATP phosphoribosyltransferase activity by histidine. The polypeptide is ATP phosphoribosyltransferase regulatory subunit (Pseudomonas syringae pv. syringae (strain B728a)).